Here is a 285-residue protein sequence, read N- to C-terminus: Nucleotide-binding protein Cphy_0331 (285 aa).

Position 8-15 (8-15) interacts with ATP; that stretch reads GMSGAGKS. Position 59–62 (59–62) interacts with GTP; the sequence is DIRS.

This sequence belongs to the RapZ-like family.

In terms of biological role, displays ATPase and GTPase activities. The protein is Nucleotide-binding protein Cphy_0331 of Lachnoclostridium phytofermentans (strain ATCC 700394 / DSM 18823 / ISDg) (Clostridium phytofermentans).